The primary structure comprises 122 residues: MRHYEIVFIVHPDQSEQVPAMIERYKGIVTARGGVIHRVEDWGRRQMAYMIQKLAKAHYVCLNIECDGETLAEIETGFKFNDAVLRHLTVKMKKAETAPSPMMKAVQKEDAAKSHRAEAPAA.

The disordered stretch occupies residues 97-122 (TAPSPMMKAVQKEDAAKSHRAEAPAA). The segment covering 106-122 (VQKEDAAKSHRAEAPAA) has biased composition (basic and acidic residues).

This sequence belongs to the bacterial ribosomal protein bS6 family.

Binds together with bS18 to 16S ribosomal RNA. This chain is Small ribosomal subunit protein bS6, found in Janthinobacterium sp. (strain Marseille) (Minibacterium massiliensis).